Here is a 394-residue protein sequence, read N- to C-terminus: 1-deoxy-D-xylulose 5-phosphate reductoisomerase (394 aa).

Residues Thr12, Gly13, Ser14, Ile15, Lys39, Gln40, and Asn126 each coordinate NADPH. 1-deoxy-D-xylulose 5-phosphate is bound at residue Lys127. Residue Glu128 coordinates NADPH. Asp152 is a Mn(2+) binding site. The 1-deoxy-D-xylulose 5-phosphate site is built by Ser153, Glu154, Ser183, and His206. Residue Glu154 coordinates Mn(2+). Gly212 serves as a coordination point for NADPH. Positions 219, 224, 225, and 228 each coordinate 1-deoxy-D-xylulose 5-phosphate. Glu228 provides a ligand contact to Mn(2+).

It belongs to the DXR family. Requires Mg(2+) as cofactor. It depends on Mn(2+) as a cofactor.

It carries out the reaction 2-C-methyl-D-erythritol 4-phosphate + NADP(+) = 1-deoxy-D-xylulose 5-phosphate + NADPH + H(+). The protein operates within isoprenoid biosynthesis; isopentenyl diphosphate biosynthesis via DXP pathway; isopentenyl diphosphate from 1-deoxy-D-xylulose 5-phosphate: step 1/6. Functionally, catalyzes the NADPH-dependent rearrangement and reduction of 1-deoxy-D-xylulose-5-phosphate (DXP) to 2-C-methyl-D-erythritol 4-phosphate (MEP). This is 1-deoxy-D-xylulose 5-phosphate reductoisomerase from Neisseria meningitidis serogroup A / serotype 4A (strain DSM 15465 / Z2491).